The sequence spans 482 residues: 7-deoxyloganetic acid glucosyl transferase (482 aa).

Residue His-22 is the Proton acceptor of the active site. An anthocyanidin is bound at residue His-22. The active-site Charge relay is the Asp-127. Thr-149, Ala-362, Gln-364, His-379, Trp-382, Asn-383, Ser-384, and Glu-387 together coordinate UDP-alpha-D-glucose. Residue Ala-402 participates in an anthocyanidin binding. The UDP-alpha-D-glucose site is built by Asp-403 and Gln-404.

This sequence belongs to the UDP-glycosyltransferase family. As to expression, expressed in the leaf internal phloem-associated parenchyma (IPAP) inside the mesophyll. Mostly observed in leaves, roots and stems, and, to a lower extent, in flowers.

Its subcellular location is the nucleus. It localises to the cytoplasm. The protein resides in the cytosol. The catalysed reaction is 7-deoxyloganetate + UDP-alpha-D-glucose = 7-deoxyloganate + UDP + H(+). It participates in alkaloid biosynthesis. Component of the seco-iridoid and derivatives monoterpenoid indole alkaloids (MIAs, e.g. vincristine, quinine, and strychnine) biosynthesis pathway. Catalyzes the glucosylation of 7-deoxyloganetic acid to form 7-deoxyloganic acid using UDP-glucose as the sugar donor. Inactive with loganetic acid, loganetin, iridodial, iridotrial, 8-OH-geraniol, jasmonic acid, gibberellic acid, indole acetic acid, salicylic acid, abscisic acid, zeatin and luteolin. The chain is 7-deoxyloganetic acid glucosyl transferase from Catharanthus roseus (Madagascar periwinkle).